A 319-amino-acid chain; its full sequence is Putative ribose-phosphate pyrophosphokinase 2 (319 aa).

ATP-binding positions include 40–42 (DGE) and 99–100 (RQ). H133 serves as a coordination point for Mg(2+). D-ribose 5-phosphate is bound by residues D222 and 226 to 230 (NTGRT).

Belongs to the ribose-phosphate pyrophosphokinase family. Class I subfamily. Homohexamer. Mg(2+) serves as cofactor.

Its subcellular location is the cytoplasm. The catalysed reaction is D-ribose 5-phosphate + ATP = 5-phospho-alpha-D-ribose 1-diphosphate + AMP + H(+). It participates in metabolic intermediate biosynthesis; 5-phospho-alpha-D-ribose 1-diphosphate biosynthesis; 5-phospho-alpha-D-ribose 1-diphosphate from D-ribose 5-phosphate (route I): step 1/1. Involved in the biosynthesis of the central metabolite phospho-alpha-D-ribosyl-1-pyrophosphate (PRPP) via the transfer of pyrophosphoryl group from ATP to 1-hydroxyl of ribose-5-phosphate (Rib-5-P). This chain is Putative ribose-phosphate pyrophosphokinase 2, found in Streptococcus pneumoniae serotype 4 (strain ATCC BAA-334 / TIGR4).